We begin with the raw amino-acid sequence, 171 residues long: Myelin basic protein (171 aa).

An N-acetylalanine modification is found at Ala1. The span at 1–12 (ASQKRPSQRHGS) shows a compositional bias: basic residues. The tract at residues 1-171 (ASQKRPSQRH…SRSGSPMARR (171 aa)) is disordered. Residues Ser7 and Ser12 each carry the phosphoserine modification. At Tyr14 the chain carries Phosphotyrosine. A Phosphoserine modification is found at Ser19. Thr20 carries the phosphothreonine modification. Citrulline is present on residues Arg25 and Arg31. A Phosphothreonine modification is found at Thr35. A Phosphoserine modification is found at Ser39. Omega-N-methylarginine occurs at positions 42 and 48. Ser55 bears the Phosphoserine mark. Residue Thr66 is modified to Phosphothreonine. Tyr68 bears the Phosphotyrosine mark. Phosphothreonine occurs at positions 95 and 98. A Deamidated glutamine modification is found at Gln103. Position 107 is an omega-N-methylarginine; alternate (Arg107). Residue Arg107 is modified to Symmetric dimethylarginine; alternate. At Ser115 the chain carries Phosphoserine. Position 122 is an N6-acetyllysine (Lys122). Arg130 carries the post-translational modification Citrulline. Gln148 carries the post-translational modification Deamidated glutamine. A Citrulline modification is found at Arg160. Ser162 is modified (phosphoserine). Ser166 is modified (phosphoserine; by UHMK1). Position 171 is a citrulline (Arg171).

Belongs to the myelin basic protein family. In terms of assembly, homodimer. Post-translationally, as in other animals, several charge isomers may be produced as a result of optional post-translational modifications, such as phosphorylation of serine or threonine residues, deamidation of glutamine or asparagine residues, citrullination and methylation of arginine residues. Phosphorylated by TAOK2, VRK2, MAPK11, MAPK12, MAPK14 and MINK1. In terms of processing, proteolytically cleaved in B cell lysosomes by cathepsin CTSG which degrades the major immunogenic MBP epitope and prevents the activation of MBP-specific autoreactive T cells.

The protein resides in the myelin membrane. Functionally, is, with PLP, the most abundant protein component of the myelin membrane in the CNS. Has a role in both the formation and stabilization of this compact multilayer arrangement of bilayers. Each splice variant and charge isomer may have a specialized function in the assembly of an optimized, biochemically functional myelin membrane. This is Myelin basic protein (MBP) from Sus scrofa (Pig).